The following is a 302-amino-acid chain: 4-hydroxy-tetrahydrodipicolinate synthase (302 aa).

Threonine 46 provides a ligand contact to pyruvate. The active-site Proton donor/acceptor is the tyrosine 134. Catalysis depends on lysine 162, which acts as the Schiff-base intermediate with substrate. Isoleucine 204 serves as a coordination point for pyruvate.

Belongs to the DapA family. Homotetramer; dimer of dimers.

It localises to the cytoplasm. The enzyme catalyses L-aspartate 4-semialdehyde + pyruvate = (2S,4S)-4-hydroxy-2,3,4,5-tetrahydrodipicolinate + H2O + H(+). The protein operates within amino-acid biosynthesis; L-lysine biosynthesis via DAP pathway; (S)-tetrahydrodipicolinate from L-aspartate: step 3/4. Functionally, catalyzes the condensation of (S)-aspartate-beta-semialdehyde [(S)-ASA] and pyruvate to 4-hydroxy-tetrahydrodipicolinate (HTPA). The sequence is that of 4-hydroxy-tetrahydrodipicolinate synthase from Xanthomonas axonopodis pv. citri (strain 306).